Consider the following 166-residue polypeptide: Probable DHNTP pyrophosphohydrolase (166 aa).

The 125-residue stretch at 42–166 (DLQLSASALV…FKKYYRYKNI (125 aa)) folds into the Nudix hydrolase domain. A Nudix box motif is present at residues 73–94 (GHVELKESPLDTAIREFHEETG). The Mg(2+) site is built by glutamate 88 and glutamate 92.

This sequence belongs to the Nudix hydrolase family. As to quaternary structure, monomer. Mg(2+) is required as a cofactor.

It participates in cofactor biosynthesis; tetrahydrofolate biosynthesis; 2-amino-4-hydroxy-6-hydroxymethyl-7,8-dihydropteridine diphosphate from 7,8-dihydroneopterin triphosphate: step 1/4. Functionally, probably mediates the removal of pyrophosphate from dihydroneopterin triphosphate (DHNTP), a possible step in the pterin branch of the folate synthesis pathway. This chain is Probable DHNTP pyrophosphohydrolase (folQ), found in Lactococcus lactis subsp. cremoris (strain MG1363).